The following is a 138-amino-acid chain: Acidic phospholipase A2 1 (138 aa).

The signal sequence occupies residues 1 to 16 (MRTLWIMAVLLVGVDG). Intrachain disulfides connect cysteine 42/cysteine 131, cysteine 44/cysteine 60, cysteine 59/cysteine 110, cysteine 65/cysteine 138, cysteine 66/cysteine 103, cysteine 73/cysteine 97, and cysteine 91/cysteine 101. Ca(2+) contacts are provided by tyrosine 43, glycine 45, and glycine 47. Histidine 63 is a catalytic residue. Ca(2+) is bound at residue aspartate 64. Residue aspartate 104 is part of the active site.

This sequence belongs to the phospholipase A2 family. Group II subfamily. D49 sub-subfamily. Homodimer. The cofactor is Ca(2+). Expressed by the venom gland.

Its subcellular location is the secreted. The enzyme catalyses a 1,2-diacyl-sn-glycero-3-phosphocholine + H2O = a 1-acyl-sn-glycero-3-phosphocholine + a fatty acid + H(+). In terms of biological role, snake venom phospholipase A2 (PLA2) that is highly lipolytic and myolytic. PLA2 catalyzes the calcium-dependent hydrolysis of the 2-acyl groups in 3-sn-phosphoglycerides. This chain is Acidic phospholipase A2 1, found in Protobothrops flavoviridis (Habu).